The sequence spans 2193 residues: Genome polyprotein (2193 aa).

The interval 1–22 is disordered; the sequence is MGSQVSTQRSGSHENSNSASEG. Residue G2 is the site of N-myristoyl glycine; by host attachment. Over 2–1503 the chain is Cytoplasmic; sequence GSQVSTQRSG…HLNRAVLIMQ (1502 aa). Amphipathic alpha-helix stretches follow at residues 566-588 and 568-588; these read GDGI…LTSL and GIAD…LTSL. Active-site for protease 2A activity residues include H883 and D901. Residues C918 and C920 each coordinate Zn(2+). Residue C972 is the For protease 2A activity of the active site. Zn(2+) is bound by residues C978 and H980. The membrane-binding stretch occupies residues 1112-1184; sequence SASWLKKFND…EQSAASQEDL (73 aa). The oligomerization stretch occupies residues 1112-1250; it reads SASWLKKFND…SPGTGKSLAT (139 aa). The tract at residues 1133-1137 is RNA-binding; it reads SNKIS. In terms of domain architecture, SF3 helicase spans 1216–1374; that stretch reads EKRMNNYMQF…YKTDLGRLDA (159 aa). ATP is bound at residue 1240 to 1247; sequence GSPGTGKS. Zn(2+) contacts are provided by C1381, C1392, and C1397. The segment at 1381 to 1397 adopts a C4-type; degenerate zinc-finger fold; sequence CSENNTANFKRCSPLVC. An RNA-binding region spans residues 1424–1431; sequence EYNNRYAI. The oligomerization stretch occupies residues 1435–1440; sequence IEALFQ. An intramembrane segment occupies 1504–1519; that stretch reads SIATVVAVVSLVYVIY. Residues 1520 to 2193 are Cytoplasmic-facing; that stretch reads KLFAGFQGAY…NLRRNWLELF (674 aa). Y1529 is subject to O-(5'-phospho-RNA)-tyrosine. The 179-residue stretch at 1549–1727 folds into the Peptidase C3 domain; that stretch reads GPSLDFALSL…FCAGLKRSYF (179 aa). Active-site for protease 3C activity residues include H1588, E1619, and C1695. Residues 1958 to 2073 enclose the RdRp catalytic domain; that stretch reads GSLFAFDYSG…ASYPFPIDCL (116 aa). The Mg(2+) site is built by D1964 and D2060.

This sequence belongs to the picornaviruses polyprotein family. In terms of assembly, interacts with capsid protein VP1 and capsid protein VP3 to form heterotrimeric protomers. As to quaternary structure, interacts with capsid protein VP0, and capsid protein VP3 to form heterotrimeric protomers. Five protomers subsequently associate to form pentamers which serve as building blocks for the capsid. Interacts with capsid protein VP2, capsid protein VP3 and capsid protein VP4 following cleavage of capsid protein VP0. Interacts with capsid protein VP1 and capsid protein VP3 in the mature capsid. In terms of assembly, interacts with capsid protein VP0 and capsid protein VP1 to form heterotrimeric protomers. Five protomers subsequently associate to form pentamers which serve as building blocks for the capsid. Interacts with capsid protein VP4 in the mature capsid. Interacts with protein 2C; this interaction may be important for virion morphogenesis. As to quaternary structure, interacts with capsid protein VP1 and capsid protein VP3. Homodimer. In terms of assembly, homohexamer; forms a hexameric ring structure with 6-fold symmetry characteristic of AAA+ ATPases. Interacts (via N-terminus) with host RTN3 (via reticulon domain); this interaction is important for viral replication. Interacts with capsid protein VP3; this interaction may be important for virion morphogenesis. As to quaternary structure, interacts with protein 3CD. Homodimer. Interacts with host GBF1. Interacts (via GOLD domain) with host ACBD3 (via GOLD domain); this interaction allows the formation of a viral protein 3A/ACBD3 heterotetramer with a 2:2 stoichiometry, which will stimulate the recruitment of host PI4KB in order to synthesize PI4P at the viral RNA replication sites. In terms of assembly, interacts with RNA-directed RNA polymerase. As to quaternary structure, interacts with host IFIH1/MDA5; this interaction inhibits host IFIH1. Interacts with protein 3AB and with RNA-directed RNA polymerase. In terms of assembly, interacts with Viral protein genome-linked and with protein 3CD. Requires Mg(2+) as cofactor. Specific enzymatic cleavages in vivo by the viral proteases yield processing intermediates and the mature proteins. Post-translationally, myristoylation is required for the formation of pentamers during virus assembly. Further assembly of 12 pentamers and a molecule of genomic RNA generates the provirion. In terms of processing, during virion maturation, immature virions are rendered infectious following cleavage of VP0 into VP4 and VP2. This maturation seems to be an autocatalytic event triggered by the presence of RNA in the capsid and it is followed by a conformational change infectious virion. Myristoylation is required during RNA encapsidation and formation of the mature virus particle. Post-translationally, VPg is uridylylated by the polymerase into VPg-pUpU. This acts as a nucleotide-peptide primer for the genomic RNA replication.

It is found in the virion. The protein resides in the host cytoplasm. It localises to the host cytoplasmic vesicle membrane. The protein localises to the host nucleus. The catalysed reaction is a ribonucleoside 5'-triphosphate + H2O = a ribonucleoside 5'-diphosphate + phosphate + H(+). It catalyses the reaction Selective cleavage of Tyr-|-Gly bond in the picornavirus polyprotein.. The enzyme catalyses RNA(n) + a ribonucleoside 5'-triphosphate = RNA(n+1) + diphosphate. It carries out the reaction Selective cleavage of Gln-|-Gly bond in the poliovirus polyprotein. In other picornavirus reactions Glu may be substituted for Gln, and Ser or Thr for Gly.. Its activity is regulated as follows. Replication or transcription is subject to high level of random mutations by the nucleotide analog ribavirin. In terms of biological role, forms an icosahedral capsid of pseudo T=3 symmetry with capsid proteins VP2 and VP3. The capsid is 300 Angstroms in diameter, composed of 60 copies of each capsid protein and enclosing the viral positive strand RNA genome. Capsid protein VP1 mainly forms the vertices of the capsid. Capsid protein VP1 interacts with host cell receptor to provide virion attachment to target host cells. This attachment induces virion internalization. After binding to its receptor, the capsid undergoes conformational changes. Capsid protein VP1 N-terminus (that contains an amphipathic alpha-helix) and capsid protein VP4 are externalized. Together, they shape a pore in the host membrane through which viral genome is translocated to host cell cytoplasm. Its function is as follows. Forms an icosahedral capsid of pseudo T=3 symmetry with capsid proteins VP2 and VP3. The capsid is 300 Angstroms in diameter, composed of 60 copies of each capsid protein and enclosing the viral positive strand RNA genome. Functionally, lies on the inner surface of the capsid shell. After binding to the host receptor, the capsid undergoes conformational changes. Capsid protein VP4 is released, Capsid protein VP1 N-terminus is externalized, and together, they shape a pore in the host membrane through which the viral genome is translocated into the host cell cytoplasm. Component of immature procapsids, which is cleaved into capsid proteins VP4 and VP2 after maturation. Allows the capsid to remain inactive before the maturation step. In terms of biological role, cysteine protease that cleaves viral polyprotein and specific host proteins. It is responsible for the autocatalytic cleavage between the P1 and P2 regions, which is the first cleavage occurring in the polyprotein. Also cleaves the host translation initiation factor EIF4G1, in order to shut down the capped cellular mRNA translation. Inhibits the host nucleus-cytoplasm protein and RNA trafficking by cleaving host members of the nuclear pores. Counteracts stress granule formation probably by antagonizing its assembly or promoting its dissassembly. Cleaves and inhibits host IFIH1/MDA5, thereby inhibiting the type-I IFN production and the establishment of the antiviral state. Cleaves and inhibits host MAVS, thereby inhibiting the type-I IFN production and the establishment of the antiviral state. Its function is as follows. Plays an essential role in the virus replication cycle by acting as a viroporin. Creates a pore in the host endoplasmic reticulum and as a consequence releases Ca2+ in the cytoplasm of infected cell. In turn, high levels of cytoplasmic calcium may trigger membrane trafficking and transport of viral ER-associated proteins to viroplasms, sites of viral genome replication. Functionally, induces and associates with structural rearrangements of intracellular membranes. Displays RNA-binding, nucleotide binding and NTPase activities. May play a role in virion morphogenesis and viral RNA encapsidation by interacting with the capsid protein VP3. Localizes the viral replication complex to the surface of membranous vesicles. Together with protein 3CD binds the Cis-Active RNA Element (CRE) which is involved in RNA synthesis initiation. Acts as a cofactor to stimulate the activity of 3D polymerase, maybe through a nucleid acid chaperone activity. In terms of biological role, localizes the viral replication complex to the surface of membranous vesicles. It inhibits host cell endoplasmic reticulum-to-Golgi apparatus transport and causes the disassembly of the Golgi complex, possibly through GBF1 interaction. This would result in depletion of MHC, trail receptors and IFN receptors at the host cell surface. Plays an essential role in viral RNA replication by recruiting ACBD3 and PI4KB at the viral replication sites, thereby allowing the formation of the rearranged membranous structures where viral replication takes place. Its function is as follows. Acts as a primer for viral RNA replication and remains covalently bound to viral genomic RNA. VPg is uridylylated prior to priming replication into VPg-pUpU. The oriI viral genomic sequence may act as a template for this. The VPg-pUpU is then used as primer on the genomic RNA poly(A) by the RNA-dependent RNA polymerase to replicate the viral genome. During genome replication, the VPg-RNA linkage is removed by the host TDP2, thereby accelerating replication. During the late stage of the replication cycle, host TDP2 is excluded from sites of viral RNA synthesis and encapsidation, allowing for the generation of progeny virions. Functionally, involved in the viral replication complex and viral polypeptide maturation. It exhibits protease activity with a specificity and catalytic efficiency that is different from protease 3C. Protein 3CD lacks polymerase activity. Protein 3CD binds to the 5'UTR of the viral genome. Major viral protease that mediates proteolytic processing of the polyprotein. Cleaves host EIF5B, contributing to host translation shutoff. Also cleaves host PABPC1, contributing to host translation shutoff. Binds and inhibits host IFIH1/MDA5, thereby inhibiting the type-I IFN production and the establishment of the antiviral state. Cleaves host MAP3K7/TAK1, resulting in inhibition of TRAF6-triggered NF-kappa-B induction. Cleaves host NLRP1, triggers host N-glycine-mediated degradation of the autoinhibitory NLRP1 N-terminal fragment. In terms of biological role, replicates the viral genomic RNA on the surface of intracellular membranes. May form linear arrays of subunits that propagate along a strong head-to-tail interaction called interface-I. Covalently attaches UMP to a tyrosine of VPg, which is used to prime RNA synthesis. The positive stranded RNA genome is first replicated at virus induced membranous vesicles, creating a dsRNA genomic replication form. This dsRNA is then used as template to synthesize positive stranded RNA genomes. ss(+)RNA genomes are either translated, replicated or encapsidated. In Homo sapiens (Human), this protein is Genome polyprotein.